We begin with the raw amino-acid sequence, 201 residues long: L(+)-tartrate dehydratase subunit beta (201 aa).

Residue His37 is part of the active site.

Belongs to the class-I fumarase family. In terms of assembly, heterotetramer of two alpha and two beta subunits.

It catalyses the reaction (2R,3R)-tartrate = oxaloacetate + H2O. The protein is L(+)-tartrate dehydratase subunit beta (ttdB) of Shigella boydii serotype 4 (strain Sb227).